Reading from the N-terminus, the 469-residue chain is MCVICFVKALVRVFKIYLTASYTYPFRGWPVAFRWDDVRAVGRSSSHRALTCAAAAAGVWLLRDETLGGDALGRPPRGARSQAQCLLQQLRELPGQLASYALAHSLGRWLVYPGSVSLMTRALLPLLQQGQERLVERYHGRRAKLVACDGNEIDTMFMDRRQHPGSHVHGPRLVICCEGNAGFYEMGCLSAPLEAGYSVLGWNHPGFGSSTGVPFPQHDANAMDVVVEYALHRLHFPPAHLVVYGWSVGGFTATWATMTYPELGALVLDATFDDLVPLALKVMPHSWKGLVVRTVREHFNLNVAEQLCCYPGPVLLLRRTQDDVVSTSGRLRPLSPGDVEGNRGNELLLRLLEHRYPVVMAREGRAVVTRWLRAGSLAQEAAFYARYRVDEDWCLALLRSYRARCEEELEGEEALGPHGPAFPWLVGQGLSSRRRRRLALFLARKHLKNVEATHFSPLEPEEFQLPWRL.

An AB hydrolase-1 domain is found at 174–298 (VICCEGNAGF…GLVVRTVREH (125 aa)). Active-site charge relay system residues include Ser247, Asp322, and His418.

The protein belongs to the AB hydrolase superfamily. ABHD16 family.

The enzyme catalyses a 1,2-diacyl-sn-glycero-3-phospho-L-serine + H2O = a 2-acyl-sn-glycero-3-phospho-L-serine + a fatty acid + H(+). The catalysed reaction is a 1-acylglycerol + H2O = glycerol + a fatty acid + H(+). It catalyses the reaction 1-(9Z-octadecenoyl)-glycerol + H2O = glycerol + (9Z)-octadecenoate + H(+). Hydrolyzes the sn-1 position of glycerophospholipids with high specificity towards phosphatidylserine (PS), PS-PLA1 enzyme. Also hydrolyzes the acyl chain of glycerolipids with a preference for the monoacylglycerol (MAG) 1-acylglycerol, MAG lipase. Plays a regulatory role in cellular lipid homeostasis by modulating genes involved in neutral lipid degradation and in phospholipid synthesis and composition. The protein is ABHD16B of Homo sapiens (Human).